The following is a 131-amino-acid chain: Large ribosomal subunit protein uL22 (131 aa).

The span at 1-11 (MAKGHRSKIKR) shows a compositional bias: basic residues. The segment at 1–20 (MAKGHRSKIKRERNEVRDTR) is disordered.

The protein belongs to the universal ribosomal protein uL22 family. In terms of assembly, part of the 50S ribosomal subunit.

This protein binds specifically to 23S rRNA; its binding is stimulated by other ribosomal proteins, e.g. L4, L17, and L20. It is important during the early stages of 50S assembly. It makes multiple contacts with different domains of the 23S rRNA in the assembled 50S subunit and ribosome. Functionally, the globular domain of the protein is located near the polypeptide exit tunnel on the outside of the subunit, while an extended beta-hairpin is found that lines the wall of the exit tunnel in the center of the 70S ribosome. The protein is Large ribosomal subunit protein uL22 of Agathobacter rectalis (strain ATCC 33656 / DSM 3377 / JCM 17463 / KCTC 5835 / VPI 0990) (Eubacterium rectale).